The sequence spans 195 residues: Cysteine/O-acetylserine efflux protein (195 aa).

Over 1–7 (MTPTLLS) the chain is Periplasmic. Residues 8 to 28 (AFWTYTLITAMTPGPNNILAL) traverse the membrane as a helical segment. Topologically, residues 29-46 (SSATSHGFRQSTRVLAGM) are cytoplasmic. The chain crosses the membrane as a helical span at residues 47-67 (SLGFLIVMLLCAGISFSLAVI). Residues 68–69 (DP) are Periplasmic-facing. A helical membrane pass occupies residues 70–90 (AAVHLLSWAGAAYIVWLAWKI). Residues 91 to 104 (ATSPTKEDGLQAKP) are Cytoplasmic-facing. Residues 105 to 125 (ISFWASFALQFVNVKIILYGV) traverse the membrane as a helical segment. The Periplasmic portion of the chain corresponds to 126–141 (TALSTFVLPQTQALSW). The chain crosses the membrane as a helical span at residues 142–162 (VVGVSVLLAMIGTFGNVCWAL). Topologically, residues 163–176 (AGHLFQRLFRQYGR) are cytoplasmic. The helical transmembrane segment at 177–194 (QLNIVLALLLIYCAVRIF) threads the bilayer. Position 195 (Y195) is a topological domain, periplasmic.

This sequence belongs to the Rht family.

It is found in the cell inner membrane. It catalyses the reaction O-acetyl-L-serine(in) = O-acetyl-L-serine(out). The catalysed reaction is L-cysteine(in) = L-cysteine(out). In terms of biological role, exporter of O-acetylserine (OAS) and cysteine. In Escherichia coli O139:H28 (strain E24377A / ETEC), this protein is Cysteine/O-acetylserine efflux protein (eamB).